A 105-amino-acid chain; its full sequence is Pyrimidine/purine nucleoside phosphorylase (105 aa).

The protein belongs to the nucleoside phosphorylase PpnP family.

The catalysed reaction is a purine D-ribonucleoside + phosphate = a purine nucleobase + alpha-D-ribose 1-phosphate. It carries out the reaction adenosine + phosphate = alpha-D-ribose 1-phosphate + adenine. The enzyme catalyses cytidine + phosphate = cytosine + alpha-D-ribose 1-phosphate. It catalyses the reaction guanosine + phosphate = alpha-D-ribose 1-phosphate + guanine. The catalysed reaction is inosine + phosphate = alpha-D-ribose 1-phosphate + hypoxanthine. It carries out the reaction thymidine + phosphate = 2-deoxy-alpha-D-ribose 1-phosphate + thymine. The enzyme catalyses uridine + phosphate = alpha-D-ribose 1-phosphate + uracil. It catalyses the reaction xanthosine + phosphate = alpha-D-ribose 1-phosphate + xanthine. In terms of biological role, catalyzes the phosphorolysis of diverse nucleosides, yielding D-ribose 1-phosphate and the respective free bases. Can use uridine, adenosine, guanosine, cytidine, thymidine, inosine and xanthosine as substrates. Also catalyzes the reverse reactions. This chain is Pyrimidine/purine nucleoside phosphorylase, found in Clostridioides difficile (strain 630) (Peptoclostridium difficile).